The primary structure comprises 132 residues: Small ribosomal subunit protein uS8 (132 aa).

Belongs to the universal ribosomal protein uS8 family. Part of the 30S ribosomal subunit. Contacts proteins S5 and S12.

In terms of biological role, one of the primary rRNA binding proteins, it binds directly to 16S rRNA central domain where it helps coordinate assembly of the platform of the 30S subunit. This is Small ribosomal subunit protein uS8 from Brucella abortus (strain S19).